The sequence spans 87 residues: DNA-directed RNA polymerase subunit omega (87 aa).

The protein belongs to the RNA polymerase subunit omega family. The RNAP catalytic core consists of 2 alpha, 1 beta, 1 beta' and 1 omega subunit. When a sigma factor is associated with the core the holoenzyme is formed, which can initiate transcription.

It carries out the reaction RNA(n) + a ribonucleoside 5'-triphosphate = RNA(n+1) + diphosphate. In terms of biological role, promotes RNA polymerase assembly. Latches the N- and C-terminal regions of the beta' subunit thereby facilitating its interaction with the beta and alpha subunits. This Pseudomonas entomophila (strain L48) protein is DNA-directed RNA polymerase subunit omega.